We begin with the raw amino-acid sequence, 135 residues long: C-type lectin LmsL (135 aa).

Cystine bridges form between cysteine 3–cysteine 14, cysteine 31–cysteine 131, cysteine 38–cysteine 133, and cysteine 106–cysteine 123. The C-type lectin domain maps to 10-132 (MNGLCYKIFD…CESKNAFLCQ (123 aa)). Ca(2+) is bound by residues glutamine 96, aspartate 98, glutamate 104, asparagine 119, and aspartate 120. The Galactose-binding signature appears at 96–98 (QPD).

This sequence belongs to the true venom lectin family. As to quaternary structure, homodimer; disulfide-linked. Expressed by the venom gland.

It localises to the secreted. Its function is as follows. Galactose-binding protein which recognizes specific carbohydrate structures and agglutinates a variety of animal cells by binding to cell-surface glycoproteins and glycolipids. Is a calcium-dependent lectin. Shows high hemagglutinating activity, that is inhibited by lactose, galactose and inositol. The chain is C-type lectin LmsL from Lachesis stenophrys (Central American bushmaster).